A 132-amino-acid polypeptide reads, in one-letter code: Large ribosomal subunit protein bL12 (132 aa).

It belongs to the bacterial ribosomal protein bL12 family. Homodimer. Part of the ribosomal stalk of the 50S ribosomal subunit. Forms a multimeric L10(L12)X complex, where L10 forms an elongated spine to which 2 to 4 L12 dimers bind in a sequential fashion. Binds GTP-bound translation factors.

Functionally, forms part of the ribosomal stalk which helps the ribosome interact with GTP-bound translation factors. Is thus essential for accurate translation. This is Large ribosomal subunit protein bL12 from Ehrlichia canis (strain Jake).